The sequence spans 100 residues: Small ribosomal subunit protein uS14c (100 aa).

It belongs to the universal ribosomal protein uS14 family. Part of the 30S ribosomal subunit.

It is found in the plastid. The protein localises to the chloroplast. Binds 16S rRNA, required for the assembly of 30S particles. The chain is Small ribosomal subunit protein uS14c from Tupiella akineta (Green alga).